We begin with the raw amino-acid sequence, 178 residues long: Large ribosomal subunit protein uL6 (178 aa).

It belongs to the universal ribosomal protein uL6 family. Part of the 50S ribosomal subunit.

This protein binds to the 23S rRNA, and is important in its secondary structure. It is located near the subunit interface in the base of the L7/L12 stalk, and near the tRNA binding site of the peptidyltransferase center. The protein is Large ribosomal subunit protein uL6 of Paenarthrobacter aurescens (strain TC1).